The sequence spans 492 residues: 3-octaprenyl-4-hydroxybenzoate carboxy-lyase (492 aa).

Asn177 is a Mn(2+) binding site. Prenylated FMN-binding positions include 180–182, 194–196, and 199–200; these read IYR, RWL, and RG. Position 243 (Glu243) interacts with Mn(2+). The active-site Proton donor is the Asp292.

This sequence belongs to the UbiD family. Homohexamer. The cofactor is prenylated FMN. Requires Mn(2+) as cofactor.

The protein resides in the cell membrane. It catalyses the reaction a 4-hydroxy-3-(all-trans-polyprenyl)benzoate + H(+) = a 2-(all-trans-polyprenyl)phenol + CO2. It participates in cofactor biosynthesis; ubiquinone biosynthesis. Functionally, catalyzes the decarboxylation of 3-octaprenyl-4-hydroxy benzoate to 2-octaprenylphenol, an intermediate step in ubiquinone biosynthesis. The sequence is that of 3-octaprenyl-4-hydroxybenzoate carboxy-lyase from Neisseria meningitidis serogroup C / serotype 2a (strain ATCC 700532 / DSM 15464 / FAM18).